Here is a 565-residue protein sequence, read N- to C-terminus: E3 ubiquitin-protein ligase ipaH7.8 (565 aa).

The segment at 1-22 (MFSVNNTHSSVSCSPSINSNST) is disordered. The tract at residues 1–262 (MFSVNNTHSS…YHGPQIYFSM (262 aa)) is interaction with target proteins. Low complexity predominate over residues 9-22 (SSVSCSPSINSNST). LRR repeat units lie at residues 58 to 79 (QEAVLNLSDLNLTSLPELPKHI), 80 to 97 (SALIVENNKLTSLPKLPA), 98 to 119 (FLKELNADNNRLSVIPELPESL), 120 to 137 (TTLSVRSNQLENLPVLPN), 138 to 157 (HLTSLFVENNRLYNLPALPE), 158 to 179 (KLKFLHVYYNRLTTLPDLPDKL), 180 to 199 (EILCAQRNNLVTFPQFSDRN), 202 to 223 (RQKEYYFHFNQITTLPESFSQL), and 225 to 248 (SSYRINISGNPLSTRVLQSLQRLT). The tract at residues 263-270 (SDGQQNTL) is linker. An E3 ubiquitin-protein ligase catalytic domain region spans residues 271–565 (HRPLADAVTA…SENGSRLHHS (295 aa)). One can recognise an NEL domain in the interval 273-565 (PLADAVTAWF…SENGSRLHHS (293 aa)). The active-site Glycyl thioester intermediate is cysteine 357.

The protein belongs to the LRR-containing bacterial E3 ligase family. Post-translationally, ubiquitinated in the presence of host E1 ubiquitin-activating enzyme, E2 ubiquitin-conjugating enzyme and ubiquitin.

The protein localises to the secreted. The protein resides in the host cytoplasm. It carries out the reaction S-ubiquitinyl-[E2 ubiquitin-conjugating enzyme]-L-cysteine + [acceptor protein]-L-lysine = [E2 ubiquitin-conjugating enzyme]-L-cysteine + N(6)-ubiquitinyl-[acceptor protein]-L-lysine.. It participates in protein modification; protein ubiquitination. Its function is as follows. E3 ubiquitin ligase effector protein that interferes with host's innate immunity. Functions to alter host cell physiology and promote bacterial survival in host tissues. Catalyzes ubiquitination of human gasdermins GSDMB and GSDMD, promoting their degradation by the proteasome, thereby preventing cell death. In contrast, activates host cell pyroptosis in mouse cells: catalyzes ubiquitination of mouse Nlrp1b allele 1 protein, releasing the cleaved C-terminal part of Nlrp1b, which polymerizes and forms the Nlrp1b inflammasome followed by host cell pyroptosis. Does not catalyze ubiquitination of mouse GSDMD. The protein is E3 ubiquitin-protein ligase ipaH7.8 of Shigella flexneri.